Here is a 282-residue protein sequence, read N- to C-terminus: Pantothenate synthetase (282 aa).

Residue 30 to 37 (MGYLHEGH) coordinates ATP. His-37 (proton donor) is an active-site residue. Gln-61 provides a ligand contact to (R)-pantoate. Gln-61 is a beta-alanine binding site. 147-150 (GMKD) serves as a coordination point for ATP. Gln-153 contacts (R)-pantoate. Residues Val-176 and 184 to 187 (KSSR) contribute to the ATP site.

Belongs to the pantothenate synthetase family. Homodimer.

It is found in the cytoplasm. It carries out the reaction (R)-pantoate + beta-alanine + ATP = (R)-pantothenate + AMP + diphosphate + H(+). It participates in cofactor biosynthesis; (R)-pantothenate biosynthesis; (R)-pantothenate from (R)-pantoate and beta-alanine: step 1/1. Functionally, catalyzes the condensation of pantoate with beta-alanine in an ATP-dependent reaction via a pantoyl-adenylate intermediate. The protein is Pantothenate synthetase of Geobacillus sp. (strain WCH70).